The chain runs to 376 residues: Chaperone protein DnaJ (376 aa).

Residues 5–70 (DYYEILGVSK…QKRAAYDQYG (66 aa)) enclose the J domain. The segment at 131-209 (GVTKEIRIPT…CHGHGRVERS (79 aa)) adopts a CR-type zinc-finger fold. Cysteine 144, cysteine 147, cysteine 161, cysteine 164, cysteine 183, cysteine 186, cysteine 197, and cysteine 200 together coordinate Zn(2+). CXXCXGXG motif repeat units lie at residues 144 to 151 (CDVCHGSG), 161 to 168 (CPTCHGSG), 183 to 190 (CPHCQGRG), and 197 to 204 (CNKCHGHG).

The protein belongs to the DnaJ family. As to quaternary structure, homodimer. Requires Zn(2+) as cofactor.

The protein resides in the cytoplasm. In terms of biological role, participates actively in the response to hyperosmotic and heat shock by preventing the aggregation of stress-denatured proteins and by disaggregating proteins, also in an autonomous, DnaK-independent fashion. Unfolded proteins bind initially to DnaJ; upon interaction with the DnaJ-bound protein, DnaK hydrolyzes its bound ATP, resulting in the formation of a stable complex. GrpE releases ADP from DnaK; ATP binding to DnaK triggers the release of the substrate protein, thus completing the reaction cycle. Several rounds of ATP-dependent interactions between DnaJ, DnaK and GrpE are required for fully efficient folding. Also involved, together with DnaK and GrpE, in the DNA replication of plasmids through activation of initiation proteins. The protein is Chaperone protein DnaJ of Escherichia coli (strain K12 / MC4100 / BW2952).